The sequence spans 386 residues: Chaperone protein DnaJ (386 aa).

The J domain occupies 3–68 (DYYEILEVAR…KKRQVYDRYG (66 aa)). A CR-type zinc finger spans residues 146–224 (GVDKELVISN…CKGQGAVKEK (79 aa)). Zn(2+)-binding residues include Cys159, Cys162, Cys176, Cys179, Cys198, Cys201, Cys212, and Cys215. CXXCXGXG motif repeat units lie at residues 159–166 (CNVCNGKG), 176–183 (CSECKGRG), 198–205 (CPKCHGEG), and 212–219 (CKNCKGQG).

This sequence belongs to the DnaJ family. In terms of assembly, homodimer. It depends on Zn(2+) as a cofactor.

Its subcellular location is the cytoplasm. Participates actively in the response to hyperosmotic and heat shock by preventing the aggregation of stress-denatured proteins and by disaggregating proteins, also in an autonomous, DnaK-independent fashion. Unfolded proteins bind initially to DnaJ; upon interaction with the DnaJ-bound protein, DnaK hydrolyzes its bound ATP, resulting in the formation of a stable complex. GrpE releases ADP from DnaK; ATP binding to DnaK triggers the release of the substrate protein, thus completing the reaction cycle. Several rounds of ATP-dependent interactions between DnaJ, DnaK and GrpE are required for fully efficient folding. Also involved, together with DnaK and GrpE, in the DNA replication of plasmids through activation of initiation proteins. The polypeptide is Chaperone protein DnaJ (Protochlamydia amoebophila (strain UWE25)).